A 259-amino-acid chain; its full sequence is L-ornithine N(alpha)-acyltransferase (259 aa).

The protein belongs to the acetyltransferase family. OlsB subfamily.

The enzyme catalyses a (3R)-hydroxyacyl-[ACP] + L-ornithine = a lyso-ornithine lipid + holo-[ACP] + H(+). Its pathway is lipid metabolism. Its function is as follows. Catalyzes the first step in the biosynthesis of ornithine lipids, which are phosphorus-free membrane lipids. Catalyzes the 3-hydroxyacyl-acyl carrier protein-dependent acylation of ornithine to form lyso-ornithine lipid (LOL). This is L-ornithine N(alpha)-acyltransferase from Rhodobacter capsulatus (strain ATCC BAA-309 / NBRC 16581 / SB1003).